The chain runs to 164 residues: RNA pyrophosphohydrolase (164 aa).

In terms of domain architecture, Nudix hydrolase spans 8 to 153 (PYRSNVGAAL…KRPIYERLAR (146 aa)). Residues 45 to 66 (GGIDGDEDPAAAVLRELDEEIG) carry the Nudix box motif.

The protein belongs to the Nudix hydrolase family. RppH subfamily. The cofactor is a divalent metal cation.

In terms of biological role, accelerates the degradation of transcripts by removing pyrophosphate from the 5'-end of triphosphorylated RNA, leading to a more labile monophosphorylated state that can stimulate subsequent ribonuclease cleavage. This Acidiphilium cryptum (strain JF-5) protein is RNA pyrophosphohydrolase.